A 247-amino-acid polypeptide reads, in one-letter code: Adenosine 5'-phosphosulfate reductase (247 aa).

The [4Fe-4S] cluster site is built by cysteine 133, cysteine 134, cysteine 216, and cysteine 219. Residues 222–247 (KPAPGSDPRSGRWAGASKTECGLHAS) are disordered. Cysteine 242 acts as the Nucleophile; cysteine thiosulfonate intermediate in catalysis.

This sequence belongs to the PAPS reductase family. CysH subfamily. Requires [4Fe-4S] cluster as cofactor.

It localises to the cytoplasm. The catalysed reaction is [thioredoxin]-disulfide + sulfite + AMP + 2 H(+) = adenosine 5'-phosphosulfate + [thioredoxin]-dithiol. It functions in the pathway sulfur metabolism; hydrogen sulfide biosynthesis; sulfite from sulfate. Its function is as follows. Catalyzes the formation of sulfite from adenosine 5'-phosphosulfate (APS) using thioredoxin as an electron donor. The polypeptide is Adenosine 5'-phosphosulfate reductase (Rhodococcus erythropolis (strain PR4 / NBRC 100887)).